Here is a 181-residue protein sequence, read N- to C-terminus: MFGLKQFYQNEVRTKLAQELDIKNPMLLPKLEKIVISVGAGAYAKDMKIMQNIAQTISLIAGQKAVITKAKKSVAGFKIREGMAVGAKVTLRNKRMYNFLEKLIVISLPRVKDFRGISRNGFDGHGNYTFGINEQLIFPEVVYDDIMVSHGMNITMVTSTDNDKEAFKLLELLGLPFAKVR.

It belongs to the universal ribosomal protein uL5 family. Part of the 50S ribosomal subunit; part of the 5S rRNA/L5/L18/L25 subcomplex. Contacts the 5S rRNA and the P site tRNA. Forms a bridge to the 30S subunit in the 70S ribosome.

In terms of biological role, this is one of the proteins that bind and probably mediate the attachment of the 5S RNA into the large ribosomal subunit, where it forms part of the central protuberance. In the 70S ribosome it contacts protein S13 of the 30S subunit (bridge B1b), connecting the 2 subunits; this bridge is implicated in subunit movement. Contacts the P site tRNA; the 5S rRNA and some of its associated proteins might help stabilize positioning of ribosome-bound tRNAs. The polypeptide is Large ribosomal subunit protein uL5 (Helicobacter pylori (strain P12)).